The sequence spans 1125 residues: RGS domain-containing serine/threonine-protein kinase A (1125 aa).

4 disordered regions span residues 1–77 (MKTS…GGNK), 96–191 (RRNS…IVDD), 276–416 (GISP…NNTN), and 455–480 (YVGGNKGSEDRRKKIEQKKKQVPAPE). 2 stretches are compositionally biased toward low complexity: residues 7 to 30 (SSNSNSNNNNNNNNNNNNNNNNNN) and 37 to 66 (SSKSLSPPTSPKQMSGNSIISNSTGNLSSG). Basic and acidic residues predominate over residues 121-136 (LDSKPPKPFDEKDDPI). Low complexity-rich tracts occupy residues 159 to 191 (QPQQTQQQSSGENLNNSSDRNNNSNENNQIVDD) and 281 to 342 (NNNN…LNNS). Positions 343–361 (PRYLNSSSSPRSMQHLSSK) are enriched in polar residues. Positions 362–416 (ITTTTTTTTTTTTTTSDDNNGNTNNNISNNNNIINNSNNNSNSNNNNNNNINNTN) are enriched in low complexity. Residues 487–603 (KFIETITDPT…ISSPFNPEWK (117 aa)) enclose the RGS domain. Residues 617-685 (TTTQPINNFN…NNSNGSNTSS (69 aa)) show a composition bias toward low complexity. 2 disordered regions span residues 617–710 (TTTQ…KERS) and 723–762 (NLSNHSNSSSNSNGKDKDKDKDKNENTTDNSNNNNNSNNN). The span at 690 to 710 (ERLDNIKGNRERVDSNGKERS) shows a compositional bias: basic and acidic residues. The span at 723–735 (NLSNHSNSSSNSN) shows a compositional bias: low complexity. A compositionally biased stretch (basic and acidic residues) spans 736–748 (GKDKDKDKDKNEN). The segment covering 749–762 (TTDNSNNNNNSNNN) has biased composition (low complexity). The Protein kinase domain occupies 842–1097 (VSIHKWIASG…YLESIIYPSV (256 aa)). ATP contacts are provided by residues 848 to 856 (IASGSSGRV) and lysine 869. Aspartate 963 acts as the Proton acceptor in catalysis.

It belongs to the protein kinase superfamily. TKL Ser/Thr protein kinase family. Autophosphorylated.

The protein resides in the cytoplasm. The protein localises to the cell membrane. It carries out the reaction L-seryl-[protein] + ATP = O-phospho-L-seryl-[protein] + ADP + H(+). It catalyses the reaction L-threonyl-[protein] + ATP = O-phospho-L-threonyl-[protein] + ADP + H(+). Up-regulated by cAMP. Its function is as follows. Serine/threonine kinase involved in negative regulation of chemotaxis. This Dictyostelium discoideum (Social amoeba) protein is RGS domain-containing serine/threonine-protein kinase A (rckA).